The following is a 319-amino-acid chain: Transaldolase (319 aa).

Lysine 126 (schiff-base intermediate with substrate) is an active-site residue.

This sequence belongs to the transaldolase family. Type 1 subfamily. As to quaternary structure, homodimer.

Its subcellular location is the cytoplasm. It catalyses the reaction D-sedoheptulose 7-phosphate + D-glyceraldehyde 3-phosphate = D-erythrose 4-phosphate + beta-D-fructose 6-phosphate. Its pathway is carbohydrate degradation; pentose phosphate pathway; D-glyceraldehyde 3-phosphate and beta-D-fructose 6-phosphate from D-ribose 5-phosphate and D-xylulose 5-phosphate (non-oxidative stage): step 2/3. Its function is as follows. Transaldolase is important for the balance of metabolites in the pentose-phosphate pathway. The chain is Transaldolase from Bordetella petrii (strain ATCC BAA-461 / DSM 12804 / CCUG 43448).